The sequence spans 207 residues: Small ribosomal subunit protein uS4 (207 aa).

Residues 30–53 are disordered; that stretch reads DKSKFDTKPGQHGRTSGQRTSDFG. The segment covering 42-52 has biased composition (polar residues); it reads GRTSGQRTSDF. In terms of domain architecture, S4 RNA-binding spans 97 to 157; the sequence is SRLDNVVYRM…EKSKKQARIV (61 aa).

This sequence belongs to the universal ribosomal protein uS4 family. As to quaternary structure, part of the 30S ribosomal subunit. Contacts protein S5. The interaction surface between S4 and S5 is involved in control of translational fidelity.

One of the primary rRNA binding proteins, it binds directly to 16S rRNA where it nucleates assembly of the body of the 30S subunit. In terms of biological role, with S5 and S12 plays an important role in translational accuracy. The protein is Small ribosomal subunit protein uS4 of Delftia acidovorans (strain DSM 14801 / SPH-1).